The sequence spans 228 residues: NAD(P)H-hydrate epimerase (228 aa).

One can recognise a YjeF N-terminal domain in the interval 9–209; that stretch reads VRAVERLAHR…LLGLTPAFLA (201 aa). 53-57 is a binding site for (6S)-NADPHX; the sequence is NNGGD. Positions 54 and 115 each coordinate K(+). (6S)-NADPHX contacts are provided by residues 119–125 and Asp148; that span reads GIGLARP. Residue Ser151 participates in K(+) binding.

The protein belongs to the NnrE/AIBP family. The cofactor is K(+).

It catalyses the reaction (6R)-NADHX = (6S)-NADHX. The catalysed reaction is (6R)-NADPHX = (6S)-NADPHX. Functionally, catalyzes the epimerization of the S- and R-forms of NAD(P)HX, a damaged form of NAD(P)H that is a result of enzymatic or heat-dependent hydration. This is a prerequisite for the S-specific NAD(P)H-hydrate dehydratase to allow the repair of both epimers of NAD(P)HX. In Bordetella bronchiseptica (strain ATCC BAA-588 / NCTC 13252 / RB50) (Alcaligenes bronchisepticus), this protein is NAD(P)H-hydrate epimerase.